A 142-amino-acid chain; its full sequence is Small ribosomal subunit protein uS8c (142 aa).

This sequence belongs to the universal ribosomal protein uS8 family. Part of the 30S ribosomal subunit.

It localises to the plastid. One of the primary rRNA binding proteins, it binds directly to 16S rRNA central domain where it helps coordinate assembly of the platform of the 30S subunit. This chain is Small ribosomal subunit protein uS8c (rps8), found in Euglena longa (Euglenophycean alga).